Here is a 418-residue protein sequence, read N- to C-terminus: UDP-N-acetylglucosamine 1-carboxyvinyltransferase (418 aa).

22 to 23 (KN) is a binding site for phosphoenolpyruvate. Arg92 is a UDP-N-acetyl-alpha-D-glucosamine binding site. Cys116 serves as the catalytic Proton donor. At Cys116 the chain carries 2-(S-cysteinyl)pyruvic acid O-phosphothioketal. UDP-N-acetyl-alpha-D-glucosamine contacts are provided by Asp305 and Ile327.

Belongs to the EPSP synthase family. MurA subfamily.

The protein resides in the cytoplasm. The catalysed reaction is phosphoenolpyruvate + UDP-N-acetyl-alpha-D-glucosamine = UDP-N-acetyl-3-O-(1-carboxyvinyl)-alpha-D-glucosamine + phosphate. It participates in cell wall biogenesis; peptidoglycan biosynthesis. Functionally, cell wall formation. Adds enolpyruvyl to UDP-N-acetylglucosamine. This chain is UDP-N-acetylglucosamine 1-carboxyvinyltransferase, found in Gluconobacter oxydans (strain 621H) (Gluconobacter suboxydans).